The sequence spans 332 residues: NH(3)-dependent NAD(+) synthetase (332 aa).

Gly-48–Ser-55 provides a ligand contact to ATP. Asp-54 contributes to the Mg(2+) binding site. Arg-184 contributes to the deamido-NAD(+) binding site. Residue Thr-204 participates in ATP binding. Position 209 (Glu-209) interacts with Mg(2+). Deamido-NAD(+) contacts are provided by Lys-217 and Asp-224. Residues Lys-233 and Thr-255 each contribute to the ATP site.

Belongs to the NAD synthetase family. As to quaternary structure, homodimer.

The catalysed reaction is deamido-NAD(+) + NH4(+) + ATP = AMP + diphosphate + NAD(+) + H(+). It functions in the pathway cofactor biosynthesis; NAD(+) biosynthesis; NAD(+) from deamido-NAD(+) (ammonia route): step 1/1. Its function is as follows. Catalyzes the ATP-dependent amidation of deamido-NAD to form NAD. Uses ammonia as a nitrogen source. The sequence is that of NH(3)-dependent NAD(+) synthetase from Rhizobium rhizogenes (strain K84 / ATCC BAA-868) (Agrobacterium radiobacter).